The primary structure comprises 397 residues: Tryptophan synthase beta chain 1 (397 aa).

An N6-(pyridoxal phosphate)lysine modification is found at K94.

The protein belongs to the TrpB family. As to quaternary structure, tetramer of two alpha and two beta chains. Requires pyridoxal 5'-phosphate as cofactor.

It carries out the reaction (1S,2R)-1-C-(indol-3-yl)glycerol 3-phosphate + L-serine = D-glyceraldehyde 3-phosphate + L-tryptophan + H2O. Its pathway is amino-acid biosynthesis; L-tryptophan biosynthesis; L-tryptophan from chorismate: step 5/5. In terms of biological role, the beta subunit is responsible for the synthesis of L-tryptophan from indole and L-serine. This chain is Tryptophan synthase beta chain 1 (trpB1), found in Archaeoglobus fulgidus (strain ATCC 49558 / DSM 4304 / JCM 9628 / NBRC 100126 / VC-16).